A 345-amino-acid polypeptide reads, in one-letter code: Photosystem II protein D1 (345 aa).

The next 3 membrane-spanning stretches (helical) occupy residues 30–47 (YVGW…TAAT), 119–134 (HFFI…EWEL), and 143–157 (WIAV…AASA). H119 contributes to the chlorophyll a binding site. A pheophytin a-binding site is contributed by Y127. 2 residues coordinate [CaMn4O5] cluster: D171 and E190. A helical membrane pass occupies residues 198–219 (FHMLGVAGVFGGSLFSAMHGSL). H199 is a binding site for chlorophyll a. A quinone is bound by residues H216 and 265-266 (SF). H216 contributes to the Fe cation binding site. H273 provides a ligand contact to Fe cation. The chain crosses the membrane as a helical span at residues 275–289 (FLAVWPVVGIWFTAL). Residues H333, E334, D343, and A345 each coordinate [CaMn4O5] cluster.

It belongs to the reaction center PufL/M/PsbA/D family. PSII is composed of 1 copy each of membrane proteins PsbA, PsbB, PsbC, PsbD, PsbE, PsbF, PsbH, PsbI, PsbJ, PsbK, PsbL, PsbM, PsbT, PsbY, PsbZ, Psb30/Ycf12, at least 3 peripheral proteins of the oxygen-evolving complex and a large number of cofactors. It forms dimeric complexes. The D1/D2 heterodimer binds P680, chlorophylls that are the primary electron donor of PSII, and subsequent electron acceptors. It shares a non-heme iron and each subunit binds pheophytin, quinone, additional chlorophylls, carotenoids and lipids. D1 provides most of the ligands for the Mn4-Ca-O5 cluster of the oxygen-evolving complex (OEC). There is also a Cl(-1) ion associated with D1 and D2, which is required for oxygen evolution. The PSII complex binds additional chlorophylls, carotenoids and specific lipids. is required as a cofactor. In terms of processing, tyr-162 forms a radical intermediate that is referred to as redox-active TyrZ, YZ or Y-Z.

It is found in the plastid. It localises to the chloroplast thylakoid membrane. It carries out the reaction 2 a plastoquinone + 4 hnu + 2 H2O = 2 a plastoquinol + O2. Photosystem II (PSII) is a light-driven water:plastoquinone oxidoreductase that uses light energy to abstract electrons from H(2)O, generating O(2) and a proton gradient subsequently used for ATP formation. It consists of a core antenna complex that captures photons, and an electron transfer chain that converts photonic excitation into a charge separation. The D1/D2 (PsbA/PsbD) reaction center heterodimer binds P680, the primary electron donor of PSII as well as several subsequent electron acceptors. The polypeptide is Photosystem II protein D1 (Euglena gracilis).